Reading from the N-terminus, the 190-residue chain is UPF0301 protein Psyr_0485 (190 aa).

The protein belongs to the UPF0301 (AlgH) family.

In Pseudomonas syringae pv. syringae (strain B728a), this protein is UPF0301 protein Psyr_0485.